A 100-amino-acid polypeptide reads, in one-letter code: Urease subunit gamma (100 aa).

It belongs to the urease gamma subunit family. As to quaternary structure, heterotrimer of UreA (gamma), UreB (beta) and UreC (alpha) subunits. Three heterotrimers associate to form the active enzyme.

Its subcellular location is the cytoplasm. The catalysed reaction is urea + 2 H2O + H(+) = hydrogencarbonate + 2 NH4(+). It functions in the pathway nitrogen metabolism; urea degradation; CO(2) and NH(3) from urea (urease route): step 1/1. The chain is Urease subunit gamma from Granulibacter bethesdensis (strain ATCC BAA-1260 / CGDNIH1).